The chain runs to 614 residues: Chaperone protein HtpG (614 aa).

The tract at residues 1-324 (MSQIETKEFQ…SEELPLNISR (324 aa)) is a; substrate-binding. Residues 325-537 (ETMQDSALIA…SHYGTHSMQR (213 aa)) form a b region. A c region spans residues 538–614 (MMQLMNRDLQ…LNEILEKALR (77 aa)).

It belongs to the heat shock protein 90 family. In terms of assembly, homodimer.

The protein localises to the cytoplasm. Functionally, molecular chaperone. Has ATPase activity. The sequence is that of Chaperone protein HtpG from Desulfitobacterium hafniense (strain Y51).